A 707-amino-acid chain; its full sequence is Choline transporter-like protein 4 (707 aa).

Topologically, residues 1-33 (MGGKQDQDKEAYGKPAKYDPSFRGPIRNRSCTD) are cytoplasmic. The helical transmembrane segment at 34-54 (IICCVLFFLFILGYIAVGILA) threads the bilayer. The Extracellular portion of the chain corresponds to 55 to 227 (WVYGDPKQVL…KIFEDFAQSW (173 aa)). Asn68, Asn185, and Asn196 each carry an N-linked (GlcNAc...) asparagine glycan. A helical membrane pass occupies residues 228–248 (YWILIALGLALVLSLLFILLL). At 249 to 250 (RL) the chain is on the cytoplasmic side. Residues 251–271 (VAGPLVFVLIIGVLGVLAYGI) form a helical membrane-spanning segment. Residues 272–307 (YHCWEEYRVLRDKGASISQLGFTTNLSAYRNVQETW) are Extracellular-facing. Asn296 carries N-linked (GlcNAc...) asparagine glycosylation. A helical membrane pass occupies residues 308-328 (LAALIILAVLEGVLLLMLIFL). Residues 329 to 356 (RQRICIAIALLKEASRAVGYIMSTMFYP) lie on the Cytoplasmic side of the membrane. The chain crosses the membrane as a helical span at residues 357–377 (LVTFALLLVCIAYWAIIALFL). The Extracellular segment spans residues 378–452 (ATSGQPQYVF…AVLGLFWTIN (75 aa)). Asn391, Asn403, and Asn413 each carry an N-linked (GlcNAc...) asparagine glycan. Residues 453–473 (WVLALGQCVLAGAFASFYWAF) form a helical membrane-spanning segment. The Cytoplasmic segment spans residues 474-498 (HKPRDIPTFPLGSAFLRTLRYHTGS). A helical transmembrane segment spans residues 499–519 (LAFGALILTLVQIARVILEYI). The Extracellular portion of the chain corresponds to 520-557 (DHKLRGAQNPLTRCILCCFKCCLWCLEKFIKFLNRNAY). The chain crosses the membrane as a helical span at residues 558-578 (IMIAIYGKNFCVSAKNAFMLL). Topologically, residues 579–594 (MRNIVRVVVLDKVTDL) are cytoplasmic. The chain crosses the membrane as a helical span at residues 595 to 615 (LLFFGKLLVVGGVGVLSFFFF). The Extracellular portion of the chain corresponds to 616-635 (TGRIPSLGKTFENPQLNYYW). Residues 636–656 (LPIMVSILGAYLIASGFFSVF) form a helical membrane-spanning segment. Topologically, residues 657 to 707 (GMCVDTLFLCFLEDLERNDGSADRPYYMSKSLLKILGKKNKGTPGDKKRKK) are cytoplasmic.

This sequence belongs to the CTL (choline transporter-like) family. N-glycosylated; N-glycosylation of Asn-68 and Asn-391 is required for a proper thiamine pyrophosphate uptake.

The protein localises to the membrane. Its subcellular location is the apical cell membrane. The catalysed reaction is choline(out) + n H(+)(in) = choline(in) + n H(+)(out). The enzyme catalyses thiamine diphosphate(out) = thiamine diphosphate(in). Choline transporter that plays a role in the choline-acetylcholine system and is required to the efferent innervation of hair cells in the olivocochlear bundle for the maintenance of physiological function of outer hair cells and the protection of hair cells from acoustic injury. Also described as a thiamine pyrophosphate transporter in colon, may mediate the absorption of microbiota-generated thiamine pyrophosphate and contribute to host thiamine (vitamin B1) homeostasis. This chain is Choline transporter-like protein 4, found in Bos taurus (Bovine).